The chain runs to 340 residues: Dual specificity protein phosphatase 12 (340 aa).

The residue at position 1 (M1) is an N-acetylmethionine. Residues 26–171 (QMLEVQPGLY…LKLYQAMGYE (146 aa)) enclose the Tyrosine-protein phosphatase domain. The active-site Phosphocysteine intermediate is the C115. Residue 116–121 (HAGVSR) coordinates substrate. A Phosphoserine modification is found at S335.

Belongs to the protein-tyrosine phosphatase family. Non-receptor class dual specificity subfamily. In terms of assembly, monomer. Requires Zn(2+) as cofactor. Ubiquitous, highest expression in spleen, testis, ovary, and peripheral blood leukocytes and lower expression in liver and lung.

It localises to the nucleus. The protein resides in the cytoplasm. The protein localises to the cytosol. The catalysed reaction is O-phospho-L-tyrosyl-[protein] + H2O = L-tyrosyl-[protein] + phosphate. It carries out the reaction O-phospho-L-seryl-[protein] + H2O = L-seryl-[protein] + phosphate. The enzyme catalyses O-phospho-L-threonyl-[protein] + H2O = L-threonyl-[protein] + phosphate. Functionally, dual specificity phosphatase; can dephosphorylate both phosphotyrosine and phosphoserine or phosphothreonine residues. Can dephosphorylate glucokinase (in vitro). Has phosphatase activity with the synthetic substrate 6,8-difluoro-4-methylumbelliferyl phosphate and other in vitro substrates. This is Dual specificity protein phosphatase 12 (DUSP12) from Homo sapiens (Human).